Reading from the N-terminus, the 551-residue chain is Pyrroline-5-carboxylate reductase 1 (551 aa).

A disordered region spans residues Leu-279–Asn-551. 7 stretches are compositionally biased toward low complexity: residues Gln-282–Gln-298, Gln-306–Gln-342, Gln-383–Arg-415, Lys-424–Ser-441, Gln-448–Pro-475, Gln-487–Gln-496, and Tyr-503–Asn-520. Residues Tyr-537 to Asn-551 are compositionally biased toward basic and acidic residues.

It belongs to the pyrroline-5-carboxylate reductase family. In terms of assembly, homodecamer; composed of 5 homodimers.

The catalysed reaction is L-proline + NADP(+) = (S)-1-pyrroline-5-carboxylate + NADPH + 2 H(+). It catalyses the reaction L-proline + NAD(+) = (S)-1-pyrroline-5-carboxylate + NADH + 2 H(+). Its pathway is amino-acid biosynthesis; L-proline biosynthesis; L-proline from L-glutamate 5-semialdehyde: step 1/1. The sequence is that of Pyrroline-5-carboxylate reductase 1 (pycr1) from Dictyostelium discoideum (Social amoeba).